Here is a 379-residue protein sequence, read N- to C-terminus: AT-rich binding protein (379 aa).

The C2H2-type 1 zinc finger occupies 29 to 52 (IVCHTCQEELQTQDQFWKHIQDEH). Basic and acidic residues predominate over residues 114 to 124 (EQREVELHEAH). Disordered stretches follow at residues 114-148 (EQRE…DAAK) and 221-267 (PTAS…STTL). Low complexity-rich tracts occupy residues 125–143 (QQQQ…QQQQ), 223–242 (ASFV…TTPP), and 249–262 (QQQQ…QQQQ). C2H2-type zinc fingers lie at residues 312 to 336 (YICD…RVVH) and 342 to 365 (FNCD…KKKH).

The protein resides in the nucleus. May be a transcription factor for genes having (A+T) stretches in their promoter and/or enhancer regions. Binds to AT rich DNA. The chain is AT-rich binding protein from Drosophila willistoni (Fruit fly).